The sequence spans 395 residues: ATP phosphoribosyltransferase regulatory subunit (395 aa).

It belongs to the class-II aminoacyl-tRNA synthetase family. HisZ subfamily. In terms of assembly, heteromultimer composed of HisG and HisZ subunits.

The protein resides in the cytoplasm. The protein operates within amino-acid biosynthesis; L-histidine biosynthesis; L-histidine from 5-phospho-alpha-D-ribose 1-diphosphate: step 1/9. Functionally, required for the first step of histidine biosynthesis. May allow the feedback regulation of ATP phosphoribosyltransferase activity by histidine. This is ATP phosphoribosyltransferase regulatory subunit from Pseudomonas entomophila (strain L48).